A 345-amino-acid chain; its full sequence is Beta-2-glycoprotein 1 (345 aa).

Positions 1-19 are cleaved as a signal peptide; it reads MPPPALVLLLGFLCHVAIA. 4 Sushi domains span residues 21 to 81, 82 to 139, 140 to 202, and 203 to 262; these read RTCP…KCMP, RVCP…VCAP, ITCP…ECRE, and VRCP…SCKA. 11 disulfide bridges follow: Cys23–Cys66, Cys51–Cys79, Cys84–Cys124, Cys110–Cys137, Cys142–Cys188, Cys174–Cys200, Cys205–Cys248, Cys234–Cys260, Cys264–Cys315, Cys300–Cys325, and Cys307–Cys345. The O-linked (GalNAc...) threonine glycan is linked to Thr33. N-linked (GlcNAc...) asparagine glycosylation occurs at Asn92. 3 N-linked (GlcNAc...) asparagine glycosylation sites follow: Asn162, Asn183, and Asn193. N-linked (GlcNAc...) asparagine glycosylation is present at Asn253. The tract at residues 263–345 is sushi-like; it reads SCKLSIKRAT…KTDASDVKPC (83 aa).

In terms of tissue distribution, expressed by the liver and secreted in plasma.

The protein localises to the secreted. Its function is as follows. Binds to various kinds of negatively charged substances such as heparin, phospholipids, and dextran sulfate. May prevent activation of the intrinsic blood coagulation cascade by binding to phospholipids on the surface of damaged cells. This chain is Beta-2-glycoprotein 1 (APOH), found in Bos taurus (Bovine).